Consider the following 633-residue polypeptide: Micronuclear linker histone polyprotein (633 aa).

DNA-binding regions (HMG box) lie at residues 12–74 (PPKK…LFHY) and 96–164 (PKKP…KKWN). The tract at residues 170–633 (AAQKKQTKRK…AYGKKANKKQ (464 aa)) is disordered. Over residues 174-190 (KQTKRKNSTSKSRRSSS) the composition is skewed to basic residues. Low complexity-rich tracts occupy residues 212-224 (SSAS…SSSS) and 253-271 (NSTS…SSSS). Basic residues-rich tracts occupy residues 272 to 309 (KNKK…RKSS) and 330 to 352 (SNKR…RKSS). 2 stretches are compositionally biased toward basic and acidic residues: residues 353 to 374 (KSQE…EGQK) and 382 to 401 (AKRD…EART). Over residues 406–416 (NKSASKASKSG) the composition is skewed to low complexity. Over residues 417 to 444 (SKSKGKSASKSKGKSSSKGKNSKSRSAS) the composition is skewed to basic residues. Polar residues predominate over residues 446-469 (PKSNAAQNSNNTHQTADSSENASS). Residues 478–491 (RQREQKDMVNEKSN) show a composition bias toward basic and acidic residues. Over residues 496–524 (SKGKKNSKSNTRSKSKSKSASKSRKNASK) the composition is skewed to basic residues. Basic and acidic residues-rich tracts occupy residues 540–550 (SRSESKSKSEA) and 559–612 (EVIE…EDSK).

All four histones are processed from the precursor molecule. In terms of processing, phosphorylated in growing and dividing cells but not in nongrowing (starved) cells. Post-translationally, the N-terminus of MIC LH-alpha and MIC LH-delta is blocked.

The protein localises to the nucleus. The protein resides in the chromosome. The chain is Micronuclear linker histone polyprotein (MLH) from Tetrahymena thermophila (strain SB210).